Consider the following 234-residue polypeptide: Octanoyltransferase (234 aa).

Positions 43 to 231 (IPTRNYFLFV…HFQELFQAEL (189 aa)) constitute a BPL/LPL catalytic domain. Substrate contacts are provided by residues 88 to 95 (RGGDITYH), 160 to 162 (AMG), and 173 to 175 (GFA). The Acyl-thioester intermediate role is filled by cysteine 191.

This sequence belongs to the LipB family.

The protein localises to the cytoplasm. It catalyses the reaction octanoyl-[ACP] + L-lysyl-[protein] = N(6)-octanoyl-L-lysyl-[protein] + holo-[ACP] + H(+). It functions in the pathway protein modification; protein lipoylation via endogenous pathway; protein N(6)-(lipoyl)lysine from octanoyl-[acyl-carrier-protein]: step 1/2. Catalyzes the transfer of endogenously produced octanoic acid from octanoyl-acyl-carrier-protein onto the lipoyl domains of lipoate-dependent enzymes. Lipoyl-ACP can also act as a substrate although octanoyl-ACP is likely to be the physiological substrate. The polypeptide is Octanoyltransferase (Christiangramia forsetii (strain DSM 17595 / CGMCC 1.15422 / KT0803) (Gramella forsetii)).